The sequence spans 718 residues: Scarecrow-like protein 9 (718 aa).

A disordered region spans residues 305–338; sequence VEKKKASDAQGGKRRARGRGRGRGRGGGGGQNGK. Residues 316–328 are compositionally biased toward basic residues; sequence GKRRARGRGRGRG. One can recognise a GRAS domain in the interval 335–713; the sequence is QNGKKEVVDL…RTVMALSVWK (379 aa). The leucine repeat I (LRI) stretch occupies residues 342 to 402; sequence VDLRSLLIHC…EARLAGTGSQ (61 aa). The interval 421–484 is VHIID; the sequence is HQLFLACCPF…YGSPKVRITG (64 aa). Residues 452–456 carry the VHIID motif; it reads VHVID. Residues 500 to 532 are leucine repeat II (LRII); sequence ETGQRLAAYAKLFGVPFEYKAIAKKWDAIQLED. Positions 541–635 are PFYRE; that stretch reads TVVNCLYRAE…MEVFGREALN (95 aa). Residues 638-713 are SAW; it reads ACEGWERVER…RTVMALSVWK (76 aa).

Belongs to the GRAS family. Expressed in cotyledons, leaves and flowers, and in the elongation zone in root.

The protein localises to the nucleus. Probable transcription factor involved in plant development. This is Scarecrow-like protein 9 (SCL9) from Arabidopsis thaliana (Mouse-ear cress).